The chain runs to 945 residues: Isoleucine--tRNA ligase 1 (945 aa).

The short motif at 66-76 (PYANGDIHLGH) is the 'HIGH' region element. L-isoleucyl-5'-AMP is bound at residue E581. The 'KMSKS' region signature appears at 622 to 626 (KMSKS). An ATP-binding site is contributed by K625. 4 residues coordinate Zn(2+): C908, C911, C928, and C931.

This sequence belongs to the class-I aminoacyl-tRNA synthetase family. IleS type 1 subfamily. As to quaternary structure, monomer. Zn(2+) serves as cofactor.

It localises to the cytoplasm. The catalysed reaction is tRNA(Ile) + L-isoleucine + ATP = L-isoleucyl-tRNA(Ile) + AMP + diphosphate. In terms of biological role, catalyzes the attachment of isoleucine to tRNA(Ile). As IleRS can inadvertently accommodate and process structurally similar amino acids such as valine, to avoid such errors it has two additional distinct tRNA(Ile)-dependent editing activities. One activity is designated as 'pretransfer' editing and involves the hydrolysis of activated Val-AMP. The other activity is designated 'posttransfer' editing and involves deacylation of mischarged Val-tRNA(Ile). The protein is Isoleucine--tRNA ligase 1 of Burkholderia pseudomallei (strain K96243).